The primary structure comprises 286 residues: 33 kDa chaperonin (286 aa).

2 cysteine pairs are disulfide-bonded: Cys-225–Cys-227 and Cys-258–Cys-261.

The protein belongs to the HSP33 family. Post-translationally, under oxidizing conditions two disulfide bonds are formed involving the reactive cysteines. Under reducing conditions zinc is bound to the reactive cysteines and the protein is inactive.

Its subcellular location is the cytoplasm. Its function is as follows. Redox regulated molecular chaperone. Protects both thermally unfolding and oxidatively damaged proteins from irreversible aggregation. Plays an important role in the bacterial defense system toward oxidative stress. The polypeptide is 33 kDa chaperonin (Shewanella baltica (strain OS223)).